The following is a 309-amino-acid chain: tRNA-cytidine(32) 2-sulfurtransferase (309 aa).

The short motif at 45-50 (SGGKDS) is the PP-loop motif element. The [4Fe-4S] cluster site is built by cysteine 120, cysteine 123, and cysteine 211.

Belongs to the TtcA family. As to quaternary structure, homodimer. The cofactor is Mg(2+). It depends on [4Fe-4S] cluster as a cofactor.

Its subcellular location is the cytoplasm. The catalysed reaction is cytidine(32) in tRNA + S-sulfanyl-L-cysteinyl-[cysteine desulfurase] + AH2 + ATP = 2-thiocytidine(32) in tRNA + L-cysteinyl-[cysteine desulfurase] + A + AMP + diphosphate + H(+). It functions in the pathway tRNA modification. Its function is as follows. Catalyzes the ATP-dependent 2-thiolation of cytidine in position 32 of tRNA, to form 2-thiocytidine (s(2)C32). The sulfur atoms are provided by the cysteine/cysteine desulfurase (IscS) system. The chain is tRNA-cytidine(32) 2-sulfurtransferase from Psychromonas ingrahamii (strain DSM 17664 / CCUG 51855 / 37).